Here is a 763-residue protein sequence, read N- to C-terminus: Ethylene receptor 2 (763 aa).

Transmembrane regions (helical) follow at residues 58–78 (FLIAMAYFSIPLELLYFATCS), 86–106 (IVLQFGAFIVLCGLTHLITMF), and 115–135 (VVLALTVAKFLTALVSFATAI). Cu cation-binding residues include C97 and H101. The 150-residue stretch at 190–339 (DRHTILYTTM…VVADQVAVAL (150 aa)) folds into the GAF domain. A Histidine kinase domain is found at 382 to 615 (AMYDGMRRPM…TIMLALQFQL (234 aa)). The Response regulatory domain maps to 641-760 (QVILVDSDDT…ALGDELYRVL (120 aa)). A 4-aspartylphosphate modification is found at D692.

The protein belongs to the ethylene receptor family. Cu cation is required as a cofactor. In terms of processing, autophosphorylated on serine, threonine and tyrosine residues.

It is found in the endoplasmic reticulum membrane. The enzyme catalyses ATP + protein L-histidine = ADP + protein N-phospho-L-histidine.. In terms of biological role, ethylene receptor related to bacterial two-component regulators. Acts as a negative regulator of ethylene signaling. May delay the transition from the vegetative stage to the floral stage by up-regulating GI (GIGANTEA) and RCN1 and cause starch accumulation in stems by down-regulating the alpha-amylase AMY3D. The polypeptide is Ethylene receptor 2 (Oryza sativa subsp. japonica (Rice)).